The following is a 215-amino-acid chain: Cytochrome b6 (215 aa).

Residues 32-52 traverse the membrane as a helical segment; sequence IFYCLGGITLTCFLIQFATGF. Position 35 (Cys-35) interacts with heme c. His-86 and His-100 together coordinate heme b. A run of 3 helical transmembrane segments spans residues 90–110, 116–136, and 186–206; these read ASMMVLMMILHVFRVYLTGGF, LTWVTGVVMAVITVTFGVTGY, and LHTFVLPWLIAVFMLLHFLMI. Residues His-187 and His-202 each coordinate heme b.

This sequence belongs to the cytochrome b family. PetB subfamily. In terms of assembly, the 4 large subunits of the cytochrome b6-f complex are cytochrome b6, subunit IV (17 kDa polypeptide, PetD), cytochrome f and the Rieske protein, while the 4 small subunits are PetG, PetL, PetM and PetN. The complex functions as a dimer. The cofactor is heme b. Heme c is required as a cofactor.

The protein resides in the cellular thylakoid membrane. Its function is as follows. Component of the cytochrome b6-f complex, which mediates electron transfer between photosystem II (PSII) and photosystem I (PSI), cyclic electron flow around PSI, and state transitions. The sequence is that of Cytochrome b6 from Synechococcus elongatus (strain ATCC 33912 / PCC 7942 / FACHB-805) (Anacystis nidulans R2).